The following is a 194-amino-acid chain: ATP synthase subunit delta (194 aa).

It belongs to the ATPase delta chain family. As to quaternary structure, F-type ATPases have 2 components, F(1) - the catalytic core - and F(0) - the membrane proton channel. F(1) has five subunits: alpha(3), beta(3), gamma(1), delta(1), epsilon(1). F(0) has three main subunits: a(1), b(2) and c(10-14). The alpha and beta chains form an alternating ring which encloses part of the gamma chain. F(1) is attached to F(0) by a central stalk formed by the gamma and epsilon chains, while a peripheral stalk is formed by the delta and b chains.

The protein localises to the cell inner membrane. In terms of biological role, f(1)F(0) ATP synthase produces ATP from ADP in the presence of a proton or sodium gradient. F-type ATPases consist of two structural domains, F(1) containing the extramembraneous catalytic core and F(0) containing the membrane proton channel, linked together by a central stalk and a peripheral stalk. During catalysis, ATP synthesis in the catalytic domain of F(1) is coupled via a rotary mechanism of the central stalk subunits to proton translocation. Its function is as follows. This protein is part of the stalk that links CF(0) to CF(1). It either transmits conformational changes from CF(0) to CF(1) or is implicated in proton conduction. The protein is ATP synthase subunit delta of Bartonella bacilliformis (strain ATCC 35685 / KC583 / Herrer 020/F12,63).